We begin with the raw amino-acid sequence, 216 residues long: Ribosomal RNA small subunit methyltransferase G (216 aa).

S-adenosyl-L-methionine is bound by residues Gly-73, Leu-78, Ala-124–Glu-125, and Arg-139.

This sequence belongs to the methyltransferase superfamily. RNA methyltransferase RsmG family.

It localises to the cytoplasm. Its function is as follows. Specifically methylates the N7 position of guanine in position 518 of 16S rRNA. This is Ribosomal RNA small subunit methyltransferase G from Arthrobacter sp. (strain FB24).